Reading from the N-terminus, the 91-residue chain is Small ribosomal subunit protein uS19 (91 aa).

The protein belongs to the universal ribosomal protein uS19 family.

In terms of biological role, protein S19 forms a complex with S13 that binds strongly to the 16S ribosomal RNA. The chain is Small ribosomal subunit protein uS19 from Ralstonia pickettii (strain 12J).